The primary structure comprises 327 residues: Serpentine receptor class alpha-33 (327 aa).

The next 6 helical transmembrane spans lie at 20 to 40, 56 to 76, 133 to 153, 186 to 206, 227 to 247, and 270 to 290; these read FSVY…VLAI, LLIT…FLQN, FSHA…STVF, IIPY…LIIY, AVVS…LFCF, and IIGW…AVFL.

Belongs to the nematode receptor-like protein sra family.

The protein resides in the membrane. This chain is Serpentine receptor class alpha-33 (sra-33), found in Caenorhabditis elegans.